We begin with the raw amino-acid sequence, 232 residues long: 5'-methylthioadenosine/S-adenosylhomocysteine nucleosidase (232 aa).

E12 (proton acceptor) is an active-site residue. Residues G78, I152, and 173–174 (ME) contribute to the substrate site. The Proton donor role is filled by D197.

Belongs to the PNP/UDP phosphorylase family. MtnN subfamily. In terms of assembly, homodimer.

It catalyses the reaction S-adenosyl-L-homocysteine + H2O = S-(5-deoxy-D-ribos-5-yl)-L-homocysteine + adenine. The catalysed reaction is S-methyl-5'-thioadenosine + H2O = 5-(methylsulfanyl)-D-ribose + adenine. The enzyme catalyses 5'-deoxyadenosine + H2O = 5-deoxy-D-ribose + adenine. It functions in the pathway amino-acid biosynthesis; L-methionine biosynthesis via salvage pathway; S-methyl-5-thio-alpha-D-ribose 1-phosphate from S-methyl-5'-thioadenosine (hydrolase route): step 1/2. In terms of biological role, catalyzes the irreversible cleavage of the glycosidic bond in both 5'-methylthioadenosine (MTA) and S-adenosylhomocysteine (SAH/AdoHcy) to adenine and the corresponding thioribose, 5'-methylthioribose and S-ribosylhomocysteine, respectively. Also cleaves 5'-deoxyadenosine, a toxic by-product of radical S-adenosylmethionine (SAM) enzymes, into 5-deoxyribose and adenine. Thus, is required for in vivo function of the radical SAM enzymes biotin synthase and lipoic acid synthase, that are inhibited by 5'-deoxyadenosine accumulation. The polypeptide is 5'-methylthioadenosine/S-adenosylhomocysteine nucleosidase (Escherichia coli O9:H4 (strain HS)).